We begin with the raw amino-acid sequence, 376 residues long: N-acetyldiaminopimelate deacetylase (376 aa).

Aspartate 69 is an active-site residue. The Proton acceptor role is filled by glutamate 128.

This sequence belongs to the peptidase M20A family. N-acetyldiaminopimelate deacetylase subfamily.

The enzyme catalyses N-acetyl-(2S,6S)-2,6-diaminopimelate + H2O = (2S,6S)-2,6-diaminopimelate + acetate. It participates in amino-acid biosynthesis; L-lysine biosynthesis via DAP pathway; LL-2,6-diaminopimelate from (S)-tetrahydrodipicolinate (acetylase route): step 3/3. In terms of biological role, catalyzes the conversion of N-acetyl-diaminopimelate to diaminopimelate and acetate. This Bacillus cytotoxicus (strain DSM 22905 / CIP 110041 / 391-98 / NVH 391-98) protein is N-acetyldiaminopimelate deacetylase.